Consider the following 142-residue polypeptide: Large ribosomal subunit protein uL11 (142 aa).

Belongs to the universal ribosomal protein uL11 family. In terms of assembly, part of the ribosomal stalk of the 50S ribosomal subunit. Interacts with L10 and the large rRNA to form the base of the stalk. L10 forms an elongated spine to which L12 dimers bind in a sequential fashion forming a multimeric L10(L12)X complex. In terms of processing, one or more lysine residues are methylated.

Functionally, forms part of the ribosomal stalk which helps the ribosome interact with GTP-bound translation factors. The protein is Large ribosomal subunit protein uL11 of Sinorhizobium medicae (strain WSM419) (Ensifer medicae).